The following is an 88-amino-acid chain: Small ribosomal subunit protein bS20 (88 aa).

The protein belongs to the bacterial ribosomal protein bS20 family.

Binds directly to 16S ribosomal RNA. This chain is Small ribosomal subunit protein bS20, found in Bradyrhizobium diazoefficiens (strain JCM 10833 / BCRC 13528 / IAM 13628 / NBRC 14792 / USDA 110).